Here is a 102-residue protein sequence, read N- to C-terminus: Small ribosomal subunit protein uS10 (102 aa).

This sequence belongs to the universal ribosomal protein uS10 family. Part of the 30S ribosomal subunit.

Its function is as follows. Involved in the binding of tRNA to the ribosomes. The polypeptide is Small ribosomal subunit protein uS10 (Bartonella henselae (strain ATCC 49882 / DSM 28221 / CCUG 30454 / Houston 1) (Rochalimaea henselae)).